A 461-amino-acid chain; its full sequence is Homocitrate synthase (461 aa).

Positions 4–259 (VGILDSTLRE…IEVVKLDKLQ (256 aa)) constitute a Pyruvate carboxyltransferase domain. Residue arginine 12 coordinates 2-oxoglutarate. Glutamate 13 is a Mg(2+) binding site. 2-oxoglutarate is bound by residues histidine 76, arginine 136, and threonine 170. The Mg(2+) site is built by histidine 198 and histidine 200. Catalysis depends on histidine 292, which acts as the Proton acceptor.

This sequence belongs to the alpha-IPM synthase/homocitrate synthase family. Homocitrate synthase LYS20/LYS21 subfamily. Requires Mg(2+) as cofactor. Mn(2+) is required as a cofactor.

It catalyses the reaction acetyl-CoA + 2-oxoglutarate + H2O = (2R)-homocitrate + CoA + H(+). It participates in amino-acid biosynthesis; L-lysine biosynthesis via AAA pathway; L-alpha-aminoadipate from 2-oxoglutarate: step 1/5. In terms of biological role, catalyzes the aldol-type condensation of 2-oxoglutarate with acetyl-CoA to yield homocitrate. Carries out the first step of the alpha-aminoadipate (AAA) lysine biosynthesis pathway. The protein is Homocitrate synthase of Saccharolobus solfataricus (strain ATCC 35092 / DSM 1617 / JCM 11322 / P2) (Sulfolobus solfataricus).